The sequence spans 198 residues: GTP cyclohydrolase 1 (198 aa).

Zn(2+) contacts are provided by Cys-87, His-90, and Cys-158.

Belongs to the GTP cyclohydrolase I family. In terms of assembly, homomer.

The enzyme catalyses GTP + H2O = 7,8-dihydroneopterin 3'-triphosphate + formate + H(+). It functions in the pathway cofactor biosynthesis; 7,8-dihydroneopterin triphosphate biosynthesis; 7,8-dihydroneopterin triphosphate from GTP: step 1/1. This chain is GTP cyclohydrolase 1, found in Janthinobacterium sp. (strain Marseille) (Minibacterium massiliensis).